A 582-amino-acid chain; its full sequence is MSGGDGRGHNTGAHSTSGNINGGPTGIGVSGGASDGSGWSSENNPWGGGSGSGIHWGGGSGRGNGGGNGNSGGGSGTGGNLSAVAAPVAFGFPALSTPGAGGLAVSISASELSAAIAGIIAKLKKVNLKFTPFGVVLSSLIPSEIAKDDPNMMSKIVTSLPADDITESPVSSLPLDKATVNVNVRVVDDVKDERQNISVVSGVPMSVPVVDAKPTERPGVFTASIPGAPVLNISVNDSTPAVQTLSPGVTNNTDKDVRPAGFTQGGNTRDAVIRFPKDSGHNAVYVSVSDVLSPDQVKQRQDEENRRQQEWDATHPVEAAERNYERARAELNQANEDVARNQERQAKAVQVYNSRKSELDAANKTLADAIAEIKQFNRFAHDPMAGGHRMWQMAGLKAQRAQTDVNNKQAAFDAAAKEKSDADAALSAAQERRKQKENKEKDAKDKLDKESKRNKPGKATGKGKPVGDKWLDDAGKDSGAPIPDRIADKLRDKEFKSFDDFRKAVWEEVSKDPELSKNLNPSNKSSVSKGYSPFTPKNQQVGGRKVYELHHDKPISQGGEVYDMDNIRVTTPKRHIDIHRGK.

Disordered regions lie at residues 1–74 (MSGG…SGGG), 246–270 (SPGVTNNTDKDVRPAGFTQGGNTRD), 294–321 (PDQVKQRQDEENRRQQEWDATHPVEAAE), 422–489 (ADAA…IADK), and 510–542 (SKDPELSKNLNPSNKSSVSKGYSPFTPKNQQVG). A compositionally biased stretch (gly residues) spans 20-35 (INGGPTGIGVSGGASD). A compositionally biased stretch (low complexity) spans 36–45 (GSGWSSENNP). Residues 46 to 74 (WGGGSGSGIHWGGGSGRGNGGGNGNSGGG) are compositionally biased toward gly residues. Basic and acidic residues-rich tracts occupy residues 297–321 (VKQRQDEENRRQQEWDATHPVEAAE), 430–453 (QERRKQKENKEKDAKDKLDKESKR), and 465–476 (PVGDKWLDDAGK). Residues 516–529 (SKNLNPSNKSSVSK) show a composition bias toward low complexity. 3 residues coordinate Zn(2+): H550, H575, and H579.

Belongs to the colicin/pyosin nuclease family.

In terms of biological role, this plasmid-coded bactericidal protein is an endonuclease active on both single- and double-stranded DNA but with undefined specificity. Functionally, colicins are polypeptide toxins produced by and active against E.coli and closely related bacteria. This Escherichia coli protein is Colicin-E9 (col).